The following is a 522-amino-acid chain: Putative malate dehydrogenase 1B (522 aa).

A disordered region spans residues 495–522 (EETEKSSSEDTPEAAAAAVSTGDETVPS).

It belongs to the LDH/MDH superfamily. MDH type 2 family.

The protein is Putative malate dehydrogenase 1B (MDH1B) of Branchiostoma floridae (Florida lancelet).